Consider the following 163-residue polypeptide: Phosphopantetheine adenylyltransferase (163 aa).

Residue Thr-10 coordinates substrate. Residues 10–11 (TF) and His-18 contribute to the ATP site. Positions 42, 74, and 88 each coordinate substrate. ATP-binding positions include 89 to 91 (GLR), Glu-99, and 124 to 130 (NSFISST).

It belongs to the bacterial CoaD family. As to quaternary structure, homohexamer. Mg(2+) is required as a cofactor.

The protein resides in the cytoplasm. It carries out the reaction (R)-4'-phosphopantetheine + ATP + H(+) = 3'-dephospho-CoA + diphosphate. It participates in cofactor biosynthesis; coenzyme A biosynthesis; CoA from (R)-pantothenate: step 4/5. In terms of biological role, reversibly transfers an adenylyl group from ATP to 4'-phosphopantetheine, yielding dephospho-CoA (dPCoA) and pyrophosphate. In Shewanella oneidensis (strain ATCC 700550 / JCM 31522 / CIP 106686 / LMG 19005 / NCIMB 14063 / MR-1), this protein is Phosphopantetheine adenylyltransferase.